The sequence spans 180 residues: Pro-glucagon (180 aa).

Positions 1 to 20 are cleaved as a signal peptide; that stretch reads MKSLYFVAGLFVMLVQGSWQ. The segment covering 25–35 has biased composition (polar residues); sequence NTEEKSSSFPA. The tract at residues 25–59 is disordered; it reads NTEEKSSSFPAPQTDPLGDPDQINEDKRHSQGTFT. Phosphoserine is present on Ser-54. The propeptide occupies 84–89; the sequence is NKNNIA. Residues Ser-105 and Ser-108 each carry the phosphoserine modification. Residue Arg-127 is modified to Arginine amide. Residues 131–145 constitute a propeptide that is removed on maturation; that stretch reads DFPEEVNIVEELRRR. A phosphoserine mark is found at Ser-150 and Ser-152.

It belongs to the glucagon family. Post-translationally, proglucagon is post-translationally processed in a tissue-specific manner in pancreatic A cells and intestinal L cells. In pancreatic A cells, the major bioactive hormone is glucagon cleaved by PCSK2/PC2. In the intestinal L cells PCSK1/PC1 liberates GLP-1, GLP-2, glicentin and oxyntomodulin. GLP-1 is further N-terminally truncated by post-translational processing in the intestinal L cells resulting in GLP-1(7-37) GLP-1-(7-36)amide. The C-terminal amidation is neither important for the metabolism of GLP-1 nor for its effects on the endocrine pancreas. Glucagon is secreted in the A cells of the islets of Langerhans. GLP-1, GLP-2, oxyntomodulin and glicentin are secreted from enteroendocrine cells throughout the gastrointestinal tract.

The protein localises to the secreted. Functionally, plays a key role in glucose metabolism and homeostasis. Regulates blood glucose by increasing gluconeogenesis and decreasing glycolysis. A counterregulatory hormone of insulin, raises plasma glucose levels in response to insulin-induced hypoglycemia. Plays an important role in initiating and maintaining hyperglycemic conditions in diabetes. In terms of biological role, potent stimulator of glucose-dependent insulin release. Also stimulates insulin release in response to IL6. Plays important roles on gastric motility and the suppression of plasma glucagon levels. May be involved in the suppression of satiety and stimulation of glucose disposal in peripheral tissues, independent of the actions of insulin. Has growth-promoting activities on intestinal epithelium. May also regulate the hypothalamic pituitary axis (HPA) via effects on LH, TSH, CRH, oxytocin, and vasopressin secretion. Increases islet mass through stimulation of islet neogenesis and pancreatic beta cell proliferation. Inhibits beta cell apoptosis. Its function is as follows. Stimulates intestinal growth and up-regulates villus height in the small intestine, concomitant with increased crypt cell proliferation and decreased enterocyte apoptosis. The gastrointestinal tract, from the stomach to the colon is the principal target for GLP-2 action. Plays a key role in nutrient homeostasis, enhancing nutrient assimilation through enhanced gastrointestinal function, as well as increasing nutrient disposal. Stimulates intestinal glucose transport and decreases mucosal permeability. Significantly reduces food intake. Inhibits gastric emptying in humans. Suppression of gastric emptying may lead to increased gastric distension, which may contribute to satiety by causing a sensation of fullness. Functionally, may modulate gastric acid secretion and the gastro-pyloro-duodenal activity. May play an important role in intestinal mucosal growth in the early period of life. The sequence is that of Pro-glucagon (GCG) from Bos taurus (Bovine).